A 110-amino-acid polypeptide reads, in one-letter code: uncharacterized protein (110 aa).

Its subcellular location is the mitochondrion. This is an uncharacterized protein from Arabidopsis thaliana (Mouse-ear cress).